The following is a 399-amino-acid chain: Carbamoyl phosphate synthase small chain (399 aa).

A CPSase region spans residues 1–209; sequence MEKFKLLKLG…SAINKKLHTS (209 aa). Serine 55, glycine 261, and glycine 263 together coordinate L-glutamine. One can recognise a Glutamine amidotransferase type-1 domain in the interval 213–399; sequence RIIVLDLGVK…VYIIYKSKSS (187 aa). The active-site Nucleophile is cysteine 289. Positions 290, 293, 329, 331, and 332 each coordinate L-glutamine. Residues histidine 372 and glutamate 374 contribute to the active site.

Belongs to the CarA family. Composed of two chains; the small (or glutamine) chain promotes the hydrolysis of glutamine to ammonia, which is used by the large (or ammonia) chain to synthesize carbamoyl phosphate. Tetramer of heterodimers (alpha,beta)4.

It is found in the plastid. It localises to the chloroplast. It carries out the reaction hydrogencarbonate + L-glutamine + 2 ATP + H2O = carbamoyl phosphate + L-glutamate + 2 ADP + phosphate + 2 H(+). The catalysed reaction is L-glutamine + H2O = L-glutamate + NH4(+). Its pathway is amino-acid biosynthesis; L-arginine biosynthesis; carbamoyl phosphate from bicarbonate: step 1/1. It functions in the pathway pyrimidine metabolism; UMP biosynthesis via de novo pathway; (S)-dihydroorotate from bicarbonate: step 1/3. Small subunit of the glutamine-dependent carbamoyl phosphate synthetase (CPSase). CPSase catalyzes the formation of carbamoyl phosphate from the ammonia moiety of glutamine, carbonate, and phosphate donated by ATP, constituting the first step of 2 biosynthetic pathways, one leading to arginine and/or urea and the other to pyrimidine nucleotides. The small subunit (glutamine amidotransferase) binds and cleaves glutamine to supply the large subunit with the substrate ammonia. The chain is Carbamoyl phosphate synthase small chain from Cyanidium caldarium (Red alga).